A 317-amino-acid polypeptide reads, in one-letter code: Zinc finger protein CRM3 (317 aa).

Over residues 1–15 (MNFSLSKQSSEKQSS) the composition is skewed to low complexity. The interval 1–22 (MNFSLSKQSSEKQSSYTDKSRS) is disordered. 2 consecutive C2H2-type zinc fingers follow at residues 254-276 (KQCP…YLIH) and 282-306 (FKCT…LKSH).

The protein resides in the nucleus. Functionally, probable transcription factor involved in the regulation of the transcription of genes involved in cell rescue and defense, as well as cell cycle and DNA processing. In Saccharomyces cerevisiae (strain ATCC 204508 / S288c) (Baker's yeast), this protein is Zinc finger protein CRM3.